Here is a 695-residue protein sequence, read N- to C-terminus: Eukaryotic translation initiation factor 3 subunit B (695 aa).

A compositionally biased stretch (basic and acidic residues) spans 1-10 (MAKKKGDEKA). Residues 1–43 (MAKKKGDEKANPAPQSDNEEQNFEEEPDFDDPEDFVEIPEEEL) form a disordered region. Over residues 17–43 (DNEEQNFEEEPDFDDPEDFVEIPEEEL) the composition is skewed to acidic residues. An RRM domain is found at 60-144 (NVVVVDGCPQ…HTFLVNLFTD (85 aa)). 4 WD repeats span residues 164-205 (KVQS…PLLL), 295-335 (PPDE…LLDK), 338-373 (IKIP…TLLE), and 444-486 (EIKE…APTL).

This sequence belongs to the eIF-3 subunit B family. In terms of assembly, component of the eukaryotic translation initiation factor 3 (eIF-3) complex.

Its subcellular location is the cytoplasm. Its function is as follows. RNA-binding component of the eukaryotic translation initiation factor 3 (eIF-3) complex, which is involved in protein synthesis of a specialized repertoire of mRNAs and, together with other initiation factors, stimulates binding of mRNA and methionyl-tRNAi to the 40S ribosome. The eIF-3 complex specifically targets and initiates translation of a subset of mRNAs involved in cell proliferation. The protein is Eukaryotic translation initiation factor 3 subunit B of Bombyx mori (Silk moth).